Here is a 95-residue protein sequence, read N- to C-terminus: Small ribosomal subunit protein uS17 (95 aa).

It belongs to the universal ribosomal protein uS17 family. In terms of assembly, part of the 30S ribosomal subunit.

Its function is as follows. One of the primary rRNA binding proteins, it binds specifically to the 5'-end of 16S ribosomal RNA. This chain is Small ribosomal subunit protein uS17, found in Streptomyces coelicolor (strain ATCC BAA-471 / A3(2) / M145).